Here is a 535-residue protein sequence, read N- to C-terminus: MNDHEVDVLVVGAGLGGLSTAMFLARQGVRVLVVERRPGLSPYPRAAGQNPRTMELLRIGGVADEVVRADDIRGTQGDFVIRLAESVRGEILRTVSESFDDMVAATEPCTPAGWAMLSQDKLEPILLAQARKHGGAIRFGTRLLSFRQHDDDAGAGVTARLAGPDGEYDLRAGYLVGADGNRSLVRESLGIGRYGHGTLTHMVGVIFDADLSGIMEPGTTGWYYLHHPEFKGTFGPTDRPDRHTLFVEYDPDEGERPEDFTPQRCVELIGLALDAPEVKPELVDIQGWEMAARIAERWREGRVFLAGDAAKVTPPTGGMSGNAAVADGFDLAWKLAAVLQGQAGAGLLDTYEDERKVAAELVVAEALAIYAQRMAPHMAEVWDKSVGYPETLLGFRYRSSAVLATDDDPARVENPLTPSGRPGFRGPHVLVSRHGERLSTVDLFGDGWTLLAGELGADWVAAAEAVSAELGVPVRAYRVGAGLTDPESAVSERYGIGKAGASLVRPDGIVAWRTDEAAADAAQTLEGVLRRVLDR.

Residues Leu-15, Gly-16, Glu-35, Gln-119, and Leu-143 each contribute to the FAD site. The active-site Proton acceptor is the Tyr-224. Asp-308 serves as a coordination point for FAD. Gly-317 lines the aklavinone pocket.

The protein belongs to the PheA/TfdB FAD monooxygenase family. Monomer. FAD serves as cofactor.

The enzyme catalyses aklavinone + NADPH + O2 + H(+) = epsilon-rhodomycinone + NADP(+) + H2O. It participates in antibiotic biosynthesis; daunorubicin biosynthesis. It functions in the pathway antibiotic biosynthesis; carminomycin biosynthesis. The protein operates within antibiotic biosynthesis; rhodomycin biosynthesis. Its activity is regulated as follows. Inhibited by phenylglyoxal and 2,3-butanedione. NADP provides a partial protection against inhibition by phenylglyoxal. Increasing the methanol concentration in the assay causes inhibition of the enzyme. In terms of biological role, involved in the biosynthesis of the anthracyclines carminomycin, rhodomycin and daunorubicin (daunomycin) which are aromatic polyketide antibiotics that exhibit high cytotoxicity and are widely applied in the chemotherapy of a variety of cancers. Catalyzes the incorporation of a hydroxyl group at position C-11 of aklavinone, resulting in epsilon-rhodomycinone. It cannot accept substrates glycosylated at position C-7 and is specific for the C-9R configuration of anthracyclines. It can use both NAD or NADP but it is slowly inactivated in the presence of NADH. In Streptomyces purpurascens, this protein is Aklavinone 12-hydroxylase RdmE (rdmE).